The sequence spans 373 residues: Lipoyl synthase (373 aa).

A disordered region spans residues 12–36 (HVVSNDHPSSSPLQPGVKQSGEDKI). Positions 81, 86, 92, 107, 111, 114, and 323 each coordinate [4Fe-4S] cluster. One can recognise a Radical SAM core domain in the interval 93-312 (FSHGTATFMI…EEYGMALGFS (220 aa)). The interval 346 to 373 (PAVSSTEHRERHTIASKSASKTESIPHR) is disordered. Positions 360–373 (ASKSASKTESIPHR) are enriched in polar residues.

This sequence belongs to the radical SAM superfamily. Lipoyl synthase family. It depends on [4Fe-4S] cluster as a cofactor.

It localises to the cytoplasm. The catalysed reaction is [[Fe-S] cluster scaffold protein carrying a second [4Fe-4S](2+) cluster] + N(6)-octanoyl-L-lysyl-[protein] + 2 oxidized [2Fe-2S]-[ferredoxin] + 2 S-adenosyl-L-methionine + 4 H(+) = [[Fe-S] cluster scaffold protein] + N(6)-[(R)-dihydrolipoyl]-L-lysyl-[protein] + 4 Fe(3+) + 2 hydrogen sulfide + 2 5'-deoxyadenosine + 2 L-methionine + 2 reduced [2Fe-2S]-[ferredoxin]. Its pathway is protein modification; protein lipoylation via endogenous pathway; protein N(6)-(lipoyl)lysine from octanoyl-[acyl-carrier-protein]: step 2/2. Its function is as follows. Catalyzes the radical-mediated insertion of two sulfur atoms into the C-6 and C-8 positions of the octanoyl moiety bound to the lipoyl domains of lipoate-dependent enzymes, thereby converting the octanoylated domains into lipoylated derivatives. The polypeptide is Lipoyl synthase (Xylella fastidiosa (strain M12)).